We begin with the raw amino-acid sequence, 429 residues long: D-amino acid dehydrogenase (429 aa).

3–17 lines the FAD pocket; the sequence is VVVLGSGVVGVTSAY.

It belongs to the DadA oxidoreductase family. Requires FAD as cofactor.

It catalyses the reaction a D-alpha-amino acid + A + H2O = a 2-oxocarboxylate + AH2 + NH4(+). It functions in the pathway amino-acid degradation; D-alanine degradation; NH(3) and pyruvate from D-alanine: step 1/1. In terms of biological role, oxidative deamination of D-amino acids. The polypeptide is D-amino acid dehydrogenase (Paraburkholderia xenovorans (strain LB400)).